The primary structure comprises 121 residues: Large ribosomal subunit protein uL18 (121 aa).

This sequence belongs to the universal ribosomal protein uL18 family. Part of the 50S ribosomal subunit; part of the 5S rRNA/L5/L18/L25 subcomplex. Contacts the 5S and 23S rRNAs.

In terms of biological role, this is one of the proteins that bind and probably mediate the attachment of the 5S RNA into the large ribosomal subunit, where it forms part of the central protuberance. This is Large ribosomal subunit protein uL18 from Paracidovorax citrulli (strain AAC00-1) (Acidovorax citrulli).